The sequence spans 146 residues: Snaclec stejaggregin-B subunit beta-2 (146 aa).

A signal peptide spans 1 to 23 (MGRFIFVSFGLLVVFLSLSGSGA). The 112-residue stretch at 32–143 (YDLYCYRVFQ…CSQTYPFVCK (112 aa)) folds into the C-type lectin domain. 2 disulfides stabilise this stretch: cysteine 53/cysteine 142 and cysteine 119/cysteine 134.

It belongs to the snaclec family. In terms of assembly, heteromultimer; disulfide-linked. Expressed by the venom gland.

It is found in the secreted. Functionally, interferes with one step of hemostasis (modulation of platelet aggregation, or coagulation cascade, for example). This chain is Snaclec stejaggregin-B subunit beta-2, found in Trimeresurus stejnegeri (Chinese green tree viper).